Here is a 209-residue protein sequence, read N- to C-terminus: Dual specificity protein phosphatase 22 (209 aa).

A Tyrosine-protein phosphatase domain is found at 4–144 (GMNKILTGLF…LEDFGKCEVH (141 aa)). Cys88 (phosphocysteine intermediate) is an active-site residue. The segment at 169–192 (LDKHKQQEAAESQNATSSGRQWNS) is disordered. A compositionally biased stretch (polar residues) spans 177–190 (AAESQNATSSGRQW).

It belongs to the protein-tyrosine phosphatase family. Non-receptor class dual specificity subfamily.

The protein localises to the cytoplasm. It is found in the nucleus. It carries out the reaction O-phospho-L-tyrosyl-[protein] + H2O = L-tyrosyl-[protein] + phosphate. It catalyses the reaction O-phospho-L-seryl-[protein] + H2O = L-seryl-[protein] + phosphate. The catalysed reaction is O-phospho-L-threonyl-[protein] + H2O = L-threonyl-[protein] + phosphate. Functionally, activates the Jnk signaling pathway. Dephosphorylates and deactivates p38 and stress-activated protein kinase/c-Jun N-terminal kinase (SAPK/JNK). The chain is Dual specificity protein phosphatase 22 (dusp22) from Xenopus laevis (African clawed frog).